Here is a 230-residue protein sequence, read N- to C-terminus: Cytidylate kinase (230 aa).

Residue 12–20 (GPSGAGKGT) participates in ATP binding.

The protein belongs to the cytidylate kinase family. Type 1 subfamily.

It localises to the cytoplasm. The catalysed reaction is CMP + ATP = CDP + ADP. The enzyme catalyses dCMP + ATP = dCDP + ADP. The chain is Cytidylate kinase from Shewanella sediminis (strain HAW-EB3).